Reading from the N-terminus, the 130-residue chain is Glutamate-rich protein 4 (130 aa).

Over residues 91–104 (EEEEESSKEEEEDQ) the composition is skewed to acidic residues. The interval 91–130 (EEEEESSKEEEEDQEPQRKQEEEHLEACPAPHPPDFEMMI) is disordered. Positions 105–116 (EPQRKQEEEHLE) are enriched in basic and acidic residues.

The chain is Glutamate-rich protein 4 (ERICH4) from Homo sapiens (Human).